A 275-amino-acid chain; its full sequence is MGFSSLLTTCRYLLYSGAGNSFILGESMPSLEDVLFLCQEEMVDGFLCVESSEIADAKLTVFNSDGSIASMCGNGLRCAMAHVAQCFGLEDVSIETERGVYQGKFFSMNRVLVDMTLPDWKKAERKLTHVLPGMPEQVFFIDAGVPHVVVFVSDLSKVPVQEWGSFLRYHEDFAPEGVNVDFVQRKKDDLLLVYTYERGCERETLSCGTGMLASALVAADIFSLGQDFSIAVCSRSRNLIKIFSEKGKVFLEGPVSLLNRSENFGWLEPKSRRFG.

Substrate-binding residues include Asn20 and Asn63. Cys72 (proton donor) is an active-site residue. Substrate is bound by residues 73–74 (GN), Asn179, and 197–198 (ER). Cys207 (proton acceptor) is an active-site residue. 208 to 209 (GT) is a binding site for substrate.

It belongs to the diaminopimelate epimerase family. In terms of assembly, homodimer.

It localises to the cytoplasm. The catalysed reaction is (2S,6S)-2,6-diaminopimelate = meso-2,6-diaminopimelate. It participates in amino-acid biosynthesis; L-lysine biosynthesis via DAP pathway; DL-2,6-diaminopimelate from LL-2,6-diaminopimelate: step 1/1. In terms of biological role, catalyzes the stereoinversion of LL-2,6-diaminopimelate (L,L-DAP) to meso-diaminopimelate (meso-DAP), a precursor of L-lysine and an essential component of the bacterial peptidoglycan. In Chlamydia trachomatis serovar A (strain ATCC VR-571B / DSM 19440 / HAR-13), this protein is Diaminopimelate epimerase.